We begin with the raw amino-acid sequence, 461 residues long: Zinc transporter 6 (461 aa).

The Cytoplasmic portion of the chain corresponds to 1-33; that stretch reads MGTIHLFRKPQRSFFGKLLREFRLVAADRRSWK. The chain crosses the membrane as a helical span at residues 34–54; that stretch reads ILLFGVINLICTGFLLMWCSS. Over 55 to 64 the chain is Extracellular; sequence TNSIALTAYT. The chain crosses the membrane as a helical span at residues 65-85; sequence YLTIFDLFSLMTCLISYWVTL. Residues 86-98 lie on the Cytoplasmic side of the membrane; it reads RKPSPVYSFGFER. A helical membrane pass occupies residues 99–119; the sequence is LEVLAVFASTVLAQLGALFIL. Residues 120–134 are Extracellular-facing; sequence KESAERFLEQPEIHT. A helical transmembrane segment spans residues 135-155; the sequence is GRLLVGTFVALCFNLFTMLSI. The Cytoplasmic portion of the chain corresponds to 156 to 200; that stretch reads RNKPFAYVSEAASTSWLQEHVADLSRSLCGIIPGLSSIFLPRMNP. A helical transmembrane segment spans residues 201 to 221; the sequence is FVLIDLAGAFALCITYMLIEI. Residues 222-223 are Extracellular-facing; the sequence is NN. A helical transmembrane segment spans residues 224 to 244; sequence YFAVDTASAIAIALMTFGTMY. Over 245-461 the chain is Cytoplasmic; the sequence is PMSVYSGKVL…TNNRIGQPRP (217 aa). The tract at residues 371–392 is disordered; the sequence is NPVTSTPAKPSSPPPEFSFNTP.

This sequence belongs to the cation diffusion facilitator (CDF) transporter (TC 2.A.4) family. SLC30A subfamily. In terms of assembly, heterodimer with SLC30A5; form a functional zinc ion transmembrane transporter. As to expression, expressed in brain; especially in cerebellum, hippocampus, parahippocampal gyrus, superior and middle temporal gyrus. Also expressed in B-cells, colon, eye, and lung. Lower expression was present in bone, brain, cervix, ear, heart, kidney, muscle, nerve, pancreas, prostate, skin, stomach, and testis.

It is found in the golgi apparatus. The protein resides in the trans-Golgi network membrane. Has probably no intrinsic transporter activity but together with SLC30A5 forms a functional zinc ion:proton antiporter heterodimer, mediating zinc entry into the lumen of organelles along the secretory pathway. As part of that zinc ion:proton antiporter, contributes to zinc ion homeostasis within the early secretory pathway and regulates the activation and folding of enzymes like alkaline phosphatases and enzymes involved in phosphatidylinositol glycan anchor biosynthesis. The polypeptide is Zinc transporter 6 (Homo sapiens (Human)).